We begin with the raw amino-acid sequence, 156 residues long: Arginine repressor (156 aa).

Belongs to the ArgR family.

The protein resides in the cytoplasm. It functions in the pathway amino-acid biosynthesis; L-arginine biosynthesis [regulation]. Regulates arginine biosynthesis genes. The protein is Arginine repressor of Yersinia pseudotuberculosis serotype I (strain IP32953).